A 215-amino-acid polypeptide reads, in one-letter code: Dual specificity phosphatase 29 (215 aa).

Positions 53 to 201 constitute a Tyrosine-protein phosphatase domain; sequence HVNEVWPRLH…LRELDKQLVK (149 aa). Residue 145 to 152 coordinates substrate; the sequence is HCAMGRSR. Cysteine 146 serves as the catalytic Phosphocysteine intermediate.

Belongs to the protein-tyrosine phosphatase family. Non-receptor class dual specificity subfamily. In terms of assembly, homodimer. Interacts with PRKAA2.

Its subcellular location is the cytoplasm. It localises to the nucleus. The catalysed reaction is O-phospho-L-tyrosyl-[protein] + H2O = L-tyrosyl-[protein] + phosphate. It carries out the reaction O-phospho-L-seryl-[protein] + H2O = L-seryl-[protein] + phosphate. It catalyses the reaction O-phospho-L-threonyl-[protein] + H2O = L-threonyl-[protein] + phosphate. Its function is as follows. Dual specificity phosphatase able to dephosphorylate phosphotyrosine, phosphoserine and phosphothreonine residues within the same substrate, with a preference for phosphotyrosine as a substrate. Involved in the modulation of intracellular signaling cascades. In skeletal muscle regulates systemic glucose homeostasis by activating, AMPK, an energy sensor protein kinase. Affects MAP kinase signaling though modulation of the MAPK1/2 cascade in skeletal muscle promoting muscle cell differentiation, development and atrophy. The protein is Dual specificity phosphatase 29 (Dusp29) of Rattus norvegicus (Rat).